A 315-amino-acid chain; its full sequence is Ribosomal RNA small subunit methyltransferase H (315 aa).

S-adenosyl-L-methionine-binding positions include 33–35 (GGH), aspartate 52, phenylalanine 84, aspartate 106, and glutamine 113. Positions 290–315 (PITASTSELENNNRSHSAKLRVAEKL) are disordered. The segment covering 292–304 (TASTSELENNNRS) has biased composition (polar residues).

Belongs to the methyltransferase superfamily. RsmH family.

It localises to the cytoplasm. The enzyme catalyses cytidine(1402) in 16S rRNA + S-adenosyl-L-methionine = N(4)-methylcytidine(1402) in 16S rRNA + S-adenosyl-L-homocysteine + H(+). Specifically methylates the N4 position of cytidine in position 1402 (C1402) of 16S rRNA. This chain is Ribosomal RNA small subunit methyltransferase H, found in Lactobacillus helveticus (strain DPC 4571).